The sequence spans 293 residues: Alcohol dehydrogenase 1 (293 aa).

Zn(2+) contacts are provided by Cys26, Cys29, Cys32, Cys40, and Cys104. NAD(+) contacts are provided by residues Gly129 to Gly134, Asp153, Arg158, Thr199, Val222, Val222 to Val224, and Phe249.

This sequence belongs to the zinc-containing alcohol dehydrogenase family. Homodimer. Zn(2+) is required as a cofactor.

The protein resides in the cytoplasm. It catalyses the reaction a primary alcohol + NAD(+) = an aldehyde + NADH + H(+). The enzyme catalyses a secondary alcohol + NAD(+) = a ketone + NADH + H(+). The chain is Alcohol dehydrogenase 1 (ADH1) from Zea luxurians (Guatemalan teosinte).